The chain runs to 825 residues: Penicillin-binding protein 1A (825 aa).

The Cytoplasmic portion of the chain corresponds to 1–6; that stretch reads MKFIKR. The helical; Signal-anchor for type II membrane protein transmembrane segment at 7 to 27 threads the bilayer; the sequence is LLVFSLICIILGVTTIFGFYF. At 28–825 the chain is on the periplasmic side; sequence YVKSDLPDVA…YSTSSGEELF (798 aa). The transglycosylase stretch occupies residues 48–216; the sequence is MQVFSQDGKL…STMNPIYSVE (169 aa). Glu86 (proton donor; for transglycosylase activity) is an active-site residue. The segment at 413 to 752 is transpeptidase; sequence PRTQDGAITA…GKTALPAWVE (340 aa). Residue Ser471 is the Acyl-ester intermediate; for transpeptidase activity of the active site.

It in the N-terminal section; belongs to the glycosyltransferase 51 family. The protein in the C-terminal section; belongs to the transpeptidase family.

The protein resides in the cell inner membrane. The enzyme catalyses [GlcNAc-(1-&gt;4)-Mur2Ac(oyl-L-Ala-gamma-D-Glu-L-Lys-D-Ala-D-Ala)](n)-di-trans,octa-cis-undecaprenyl diphosphate + beta-D-GlcNAc-(1-&gt;4)-Mur2Ac(oyl-L-Ala-gamma-D-Glu-L-Lys-D-Ala-D-Ala)-di-trans,octa-cis-undecaprenyl diphosphate = [GlcNAc-(1-&gt;4)-Mur2Ac(oyl-L-Ala-gamma-D-Glu-L-Lys-D-Ala-D-Ala)](n+1)-di-trans,octa-cis-undecaprenyl diphosphate + di-trans,octa-cis-undecaprenyl diphosphate + H(+). It catalyses the reaction Preferential cleavage: (Ac)2-L-Lys-D-Ala-|-D-Ala. Also transpeptidation of peptidyl-alanyl moieties that are N-acyl substituents of D-alanine.. It functions in the pathway cell wall biogenesis; peptidoglycan biosynthesis. Its function is as follows. Cell wall formation. Synthesis of cross-linked peptidoglycan from the lipid intermediates. The enzyme has a penicillin-insensitive transglycosylase N-terminal domain (formation of linear glycan strands) and a penicillin-sensitive transpeptidase C-terminal domain (cross-linking of the peptide subunits). This chain is Penicillin-binding protein 1A (mrcA), found in Vibrio cholerae serotype O1 (strain ATCC 39315 / El Tor Inaba N16961).